Here is a 154-residue protein sequence, read N- to C-terminus: 20 kDa calcium-binding protein (154 aa).

EF-hand domains are found at residues 13–48, 49–84, 86–121, and 122–154; these read DQVKIAKDVFKRFDKRGQEKISTTDLGPAFRALNLT, VKPDTLKEWADQVDDDATGFIDFNGFLICYGKKLQE, QDERDLRDAFRVLDKNKRGEIDVEDLRWILKGLGDD, and LTEEEIDDMIRDTDTDGSGFVDFDEFYKLMTSE. Ca(2+) is bound by residues D62, D64, T66, D99, N101, E105, D110, D135, D137, S139, and E146.

Its subcellular location is the tegument membrane. Its function is as follows. Calcium-binding protein. This Schistosoma mansoni (Blood fluke) protein is 20 kDa calcium-binding protein (SM20).